A 622-amino-acid chain; its full sequence is WD repeat-containing protein 70 (622 aa).

The span at 36 to 55 (RTAVERSKQTLEAREKEEQL) shows a compositional bias: basic and acidic residues. The segment at 36–141 (RTAVERSKQT…DNPVKDIPDS (106 aa)) is disordered. The segment covering 67 to 84 (SSSGQKKTKASGSSSGSE) has biased composition (low complexity). Residues 120–132 (SDDEDDEEHEDDD) are compositionally biased toward acidic residues. 7 WD repeats span residues 148-187 (HGTK…ASLQ), 195-236 (CECH…ECVK), 249-289 (GHTA…KHKG), 298-337 (GKPV…HTKF), 344-383 (TPGT…NPLN), 387-434 (GLEN…KIYE), and 437-476 (VTEA…QRGA). Residues 508–533 (REPRQRSTRKQLEKDRLDPVKSHKPE) show a composition bias toward basic and acidic residues. Disordered stretches follow at residues 508 to 549 (REPR…GTHG) and 602 to 622 (AEVD…KRKI). The segment covering 539–549 (PGRGGRVGTHG) has biased composition (gly residues). Residues 604–614 (VDSDEEEPDNE) show a composition bias toward acidic residues.

This sequence belongs to the WD repeat GAD-1 family.

The protein is WD repeat-containing protein 70 (wdr70) of Xenopus laevis (African clawed frog).